A 509-amino-acid chain; its full sequence is UDP-N-acetylmuramoyl-L-alanyl-D-glutamate--2,6-diaminopimelate ligase (509 aa).

Ser-32 contacts UDP-N-acetyl-alpha-D-muramoyl-L-alanyl-D-glutamate. An ATP-binding site is contributed by 117 to 123; that stretch reads GTNGKTT. UDP-N-acetyl-alpha-D-muramoyl-L-alanyl-D-glutamate contacts are provided by residues 159 to 160, Ser-186, Gln-192, and Arg-194; that span reads TT. N6-carboxylysine is present on Lys-226. Residues Arg-401, 425–428, Gly-476, and Glu-480 contribute to the meso-2,6-diaminopimelate site; that span reads DNPR. A Meso-diaminopimelate recognition motif motif is present at residues 425-428; the sequence is DNPR.

The protein belongs to the MurCDEF family. MurE subfamily. Mg(2+) serves as cofactor. Carboxylation is probably crucial for Mg(2+) binding and, consequently, for the gamma-phosphate positioning of ATP.

It is found in the cytoplasm. The catalysed reaction is UDP-N-acetyl-alpha-D-muramoyl-L-alanyl-D-glutamate + meso-2,6-diaminopimelate + ATP = UDP-N-acetyl-alpha-D-muramoyl-L-alanyl-gamma-D-glutamyl-meso-2,6-diaminopimelate + ADP + phosphate + H(+). It participates in cell wall biogenesis; peptidoglycan biosynthesis. Catalyzes the addition of meso-diaminopimelic acid to the nucleotide precursor UDP-N-acetylmuramoyl-L-alanyl-D-glutamate (UMAG) in the biosynthesis of bacterial cell-wall peptidoglycan. The chain is UDP-N-acetylmuramoyl-L-alanyl-D-glutamate--2,6-diaminopimelate ligase from Prochlorococcus marinus (strain NATL1A).